The primary structure comprises 491 residues: Putative F-box/LRR-repeat protein At3g59230 (491 aa).

Positions 11–57 constitute an F-box domain; that stretch reads KDIINSLPEALIYHILSFLSTKEAAITSLLSRKWRYFFAFVPNLDFD. 7 LRR repeats span residues 127–154, 156–182, 184–209, 325–351, 352–377, 419–444, and 472–491; these read LSIA…RIEA, NGLA…YLDS, ELDY…VMID, ASTV…TIES, NTKV…VFQG, NDKT…NIYY, and VQVI…SSSI.

The sequence is that of Putative F-box/LRR-repeat protein At3g59230 from Arabidopsis thaliana (Mouse-ear cress).